Reading from the N-terminus, the 265-residue chain is Chlorophyll a-b binding protein 1A, chloroplastic (265 aa).

The transit peptide at Met-1–Thr-34 directs the protein to the chloroplast. The helical transmembrane segment at Leu-151–Val-171 threads the bilayer. Residues Val-152, Ser-156, Gln-164, Glu-172, Arg-175, and Leu-181 each contribute to the chlorophyll b site. Residues Lys-212, Glu-213, Asn-216, Arg-218, Gln-230, His-245, and Ala-254 each coordinate chlorophyll a. The helical transmembrane segment at Leu-219–Leu-239 threads the bilayer. Phe-261 is a binding site for chlorophyll b.

The protein belongs to the light-harvesting chlorophyll a/b-binding (LHC) protein family. The LHC complex consists of chlorophyll a-b binding proteins. Binds at least 14 chlorophylls (8 Chl-a and 6 Chl-b) and carotenoids such as lutein and neoxanthin. serves as cofactor. Post-translationally, photoregulated by reversible phosphorylation of its threonine residues.

It is found in the plastid. The protein localises to the chloroplast thylakoid membrane. Its function is as follows. The light-harvesting complex (LHC) functions as a light receptor, it captures and delivers excitation energy to photosystems with which it is closely associated. In Solanum lycopersicum (Tomato), this protein is Chlorophyll a-b binding protein 1A, chloroplastic (CAB1A).